A 345-amino-acid polypeptide reads, in one-letter code: Selenide, water dikinase (345 aa).

Cys16 is an active-site residue. ATP is bound by residues Lys19 and 45–47 (TSE). Residue Asp48 participates in Mg(2+) binding. Residues Asp65, Asp88, and 136-138 (GHT) contribute to the ATP site. Asp88 serves as a coordination point for Mg(2+). Asp224 serves as a coordination point for Mg(2+).

Belongs to the selenophosphate synthase 1 family. Class I subfamily. Homodimer. The cofactor is Mg(2+).

The enzyme catalyses hydrogenselenide + ATP + H2O = selenophosphate + AMP + phosphate + 2 H(+). Synthesizes selenophosphate from selenide and ATP. This Aliarcobacter butzleri (strain RM4018) (Arcobacter butzleri) protein is Selenide, water dikinase.